Reading from the N-terminus, the 921-residue chain is Sodium/calcium exchanger 2 (921 aa).

The N-terminal stretch at 1 to 20 is a signal peptide; sequence MAPLALMGVVLLLGVPHCLG. Positions 23-42 are disordered; it reads TPTPSLPPPTANDSDASPEG. Residues 69–89 form a helical membrane-spanning segment; that stretch reads VARAVVYFVAMVYMFLGVSII. 2 N-linked (GlcNAc...) asparagine glycosylation sites follow: asparagine 125 and asparagine 130. The next 4 helical transmembrane spans lie at 131-151, 165-185, 197-217, and 226-246; these read LTLM…IEVC, IVGS…YVIP, VFFV…LILA, and VWEA…AWMA. Residues 248–267 are putative calmodulin-binding region; the sequence is KRLLFYKYVYKRYRTDPRSG. Residues 371–391 form a disordered region; sequence HAADAARRPGATDGAPDDEDD. 2 consecutive Calx-beta domains span residues 389 to 482 and 512 to 611; these read EDDG…FVRL and ATVT…FIEL. Ca(2+) is bound by residues glutamate 407, aspartate 443, aspartate 468, aspartate 469, isoleucine 471, glutamate 473, glutamate 476, aspartate 518, aspartate 519, aspartate 520, glutamate 536, aspartate 598, glutamate 599, and glutamate 600. Serine 622 is modified (phosphoserine). Glutamate 665 is a Ca(2+) binding site. The next 6 membrane-spanning stretches (helical) occupy residues 721 to 741, 749 to 769, 786 to 806, 823 to 843, 855 to 875, and 893 to 913; these read CFDY…ACVP, WACF…IGDL, VVFV…VAAL, AVNV…YWAV, LAFS…VLLY, and LATT…SSLE.

It belongs to the Ca(2+):cation antiporter (CaCA) (TC 2.A.19) family. SLC8 subfamily. In terms of tissue distribution, detected in kidney cortex, in distal convoluted tubules and connecting segments. Detected in brain and spinal cord (at protein level). Detected in brain, especially in hippocampus CA1, CA2 and CA3 fiels, dentate gyrus, cerebellum and brain cortex.

Its subcellular location is the cell membrane. The protein resides in the basolateral cell membrane. It catalyses the reaction Ca(2+)(in) + 3 Na(+)(out) = Ca(2+)(out) + 3 Na(+)(in). With respect to regulation, calcium transport is down-regulated by Na(+) and stimulated by Ca(2+). In terms of biological role, mediates the electrogenic exchange of Ca(2+) against Na(+) ions across the cell membrane, and thereby contributes to the regulation of cytoplasmic Ca(2+) levels and Ca(2+)-dependent cellular processes. Contributes to cellular Ca(2+) homeostasis in excitable cells. Contributes to the rapid decrease of cytoplasmic Ca(2+) levels back to baseline after neuronal activation, and thereby contributes to modulate synaptic plasticity, learning and memory. Plays a role in regulating urinary Ca(2+) and Na(+) excretion. The protein is Sodium/calcium exchanger 2 of Mus musculus (Mouse).